The primary structure comprises 386 residues: MTDDPISPSMALLPAGLRDLLPPDAEHEARVVGRLMKEFTRHGYERVKPPLIEFEEGLLSGPGRALAKQTFRLMDPISQQMMGVRSDMTLQVARIAATRMPKSPRPLRLSYAGQVLRVKGTQLRPERQFGQVGVELIGGMQVEADAEVVLLAASALAAVGADGVTIDLTVPTLVPTVCRALNLSEAETRCVRDALDRRDTAAVAAIGGPAGDLLVRIMAAGGPAAAAVAALSAVDLPTVAEPDRWRLTEVVKLLTAAAPHLNLTIDPVEQRGFEYQTGLSFTIFARGVTGELGRGGRYRSGGDGEPATGFTLYTDTVLRAIPGPPPPRRILLPHGTPYAEGARLRDEGWQTVAVLEPGADLSAEARRQGCGHLWAGGRIQEIQDRP.

The protein belongs to the class-II aminoacyl-tRNA synthetase family. HisZ subfamily. Heteromultimer composed of HisG and HisZ subunits.

It is found in the cytoplasm. It participates in amino-acid biosynthesis; L-histidine biosynthesis; L-histidine from 5-phospho-alpha-D-ribose 1-diphosphate: step 1/9. Its function is as follows. Required for the first step of histidine biosynthesis. May allow the feedback regulation of ATP phosphoribosyltransferase activity by histidine. This Rhodospirillum centenum (strain ATCC 51521 / SW) protein is ATP phosphoribosyltransferase regulatory subunit.